The primary structure comprises 438 residues: 3-phosphoshikimate 1-carboxyvinyltransferase (438 aa).

3 residues coordinate 3-phosphoshikimate: Lys26, Ser27, and Arg31. Phosphoenolpyruvate is bound at residue Lys26. Residues Gly99 and Arg127 each contribute to the phosphoenolpyruvate site. Ser172, Gln174, Asp320, and Lys347 together coordinate 3-phosphoshikimate. Phosphoenolpyruvate is bound at residue Gln174. The Proton acceptor role is filled by Asp320. Phosphoenolpyruvate-binding residues include Arg351 and Arg392.

The protein belongs to the EPSP synthase family. In terms of assembly, monomer.

The protein localises to the cytoplasm. It catalyses the reaction 3-phosphoshikimate + phosphoenolpyruvate = 5-O-(1-carboxyvinyl)-3-phosphoshikimate + phosphate. It functions in the pathway metabolic intermediate biosynthesis; chorismate biosynthesis; chorismate from D-erythrose 4-phosphate and phosphoenolpyruvate: step 6/7. Catalyzes the transfer of the enolpyruvyl moiety of phosphoenolpyruvate (PEP) to the 5-hydroxyl of shikimate-3-phosphate (S3P) to produce enolpyruvyl shikimate-3-phosphate and inorganic phosphate. This Xanthomonas campestris pv. campestris (strain 8004) protein is 3-phosphoshikimate 1-carboxyvinyltransferase.